The primary structure comprises 700 residues: Mitogen-activated protein kinase 9 (700 aa).

The Protein kinase domain occupies 107–398 (YRIQEVIGKG…AEEALTDPYF (292 aa)). ATP-binding positions include 113 to 121 (IGKGSYGVV) and Lys-136. Residue Asp-233 is the Proton acceptor of the active site. At Thr-269 the chain carries Phosphothreonine. Residues 269 to 271 (TDY) carry the TXY motif. Tyr-271 carries the post-translational modification Phosphotyrosine. Positions 475 to 523 (EESNGSGSAIPMERKHASLPRSTTVHSTPIPPKEQPLAASLKSSRPVSD) are disordered.

Belongs to the protein kinase superfamily. CMGC Ser/Thr protein kinase family. MAP kinase subfamily. In terms of processing, dually phosphorylated on Thr-269 and Tyr-271, which activates the enzyme.

It catalyses the reaction L-seryl-[protein] + ATP = O-phospho-L-seryl-[protein] + ADP + H(+). It carries out the reaction L-threonyl-[protein] + ATP = O-phospho-L-threonyl-[protein] + ADP + H(+). Its activity is regulated as follows. Activated by threonine and tyrosine phosphorylation. The polypeptide is Mitogen-activated protein kinase 9 (MPK9) (Oryza sativa subsp. japonica (Rice)).